The chain runs to 130 residues: RNA silencing suppressor p14 (130 aa).

Its function is as follows. Acts as a suppressor of RNA-mediated gene silencing, also known as post-transcriptional gene silencing (PTGS), a mechanism of plant viral defense that limits the accumulation of viral RNAs. Binds to dsRNAs without size specificity. This chain is RNA silencing suppressor p14, found in Pothos latent virus (isolate Pigeonpea/India) (PoLV).